Reading from the N-terminus, the 248-residue chain is tRNA (guanine-N(1)-)-methyltransferase (248 aa).

S-adenosyl-L-methionine is bound by residues G113 and 133–138; that span reads VGDYVL.

The protein belongs to the RNA methyltransferase TrmD family. As to quaternary structure, homodimer.

It localises to the cytoplasm. It catalyses the reaction guanosine(37) in tRNA + S-adenosyl-L-methionine = N(1)-methylguanosine(37) in tRNA + S-adenosyl-L-homocysteine + H(+). Specifically methylates guanosine-37 in various tRNAs. In Shewanella oneidensis (strain ATCC 700550 / JCM 31522 / CIP 106686 / LMG 19005 / NCIMB 14063 / MR-1), this protein is tRNA (guanine-N(1)-)-methyltransferase.